Consider the following 122-residue polypeptide: Large ribosomal subunit protein uL14 (122 aa).

This sequence belongs to the universal ribosomal protein uL14 family. In terms of assembly, part of the 50S ribosomal subunit. Forms a cluster with proteins L3 and L19. In the 70S ribosome, L14 and L19 interact and together make contacts with the 16S rRNA in bridges B5 and B8.

Binds to 23S rRNA. Forms part of two intersubunit bridges in the 70S ribosome. The polypeptide is Large ribosomal subunit protein uL14 (Geobacillus thermodenitrificans (strain NG80-2)).